A 492-amino-acid polypeptide reads, in one-letter code: Ketol-acid reductoisomerase (NADP(+)) (492 aa).

Residues 15-208 form the KARI N-terminal Rossmann domain; the sequence is AQLGQCRFMD…GGDRAGVLQS (194 aa). Residues 45–48, R68, R76, S78, and 108–110 contribute to the NADP(+) site; these read CGAQ and DKQ. H132 is a catalytic residue. Residue G158 coordinates NADP(+). 2 KARI C-terminal knotted domains span residues 209–353 and 354–486; these read SFIA…DEQT and YFDK…MTDM. Residues D217, E221, E389, and E393 each coordinate Mg(2+). Position 414 (S414) interacts with substrate.

The protein belongs to the ketol-acid reductoisomerase family. Requires Mg(2+) as cofactor.

It catalyses the reaction (2R)-2,3-dihydroxy-3-methylbutanoate + NADP(+) = (2S)-2-acetolactate + NADPH + H(+). It carries out the reaction (2R,3R)-2,3-dihydroxy-3-methylpentanoate + NADP(+) = (S)-2-ethyl-2-hydroxy-3-oxobutanoate + NADPH + H(+). It functions in the pathway amino-acid biosynthesis; L-isoleucine biosynthesis; L-isoleucine from 2-oxobutanoate: step 2/4. The protein operates within amino-acid biosynthesis; L-valine biosynthesis; L-valine from pyruvate: step 2/4. Functionally, involved in the biosynthesis of branched-chain amino acids (BCAA). Catalyzes an alkyl-migration followed by a ketol-acid reduction of (S)-2-acetolactate (S2AL) to yield (R)-2,3-dihydroxy-isovalerate. In the isomerase reaction, S2AL is rearranged via a Mg-dependent methyl migration to produce 3-hydroxy-3-methyl-2-ketobutyrate (HMKB). In the reductase reaction, this 2-ketoacid undergoes a metal-dependent reduction by NADPH to yield (R)-2,3-dihydroxy-isovalerate. This is Ketol-acid reductoisomerase (NADP(+)) from Shewanella oneidensis (strain ATCC 700550 / JCM 31522 / CIP 106686 / LMG 19005 / NCIMB 14063 / MR-1).